The sequence spans 394 residues: Phenylalanine 4-monooxygenase, chloroplastic (394 aa).

The transit peptide at 1–79 (MAMEVGYLRH…LNQIQAVSTA (79 aa)) directs the protein to the chloroplast. Positions 75 to 97 (AVSTAEKEREADKTSTPPIPSSI) are disordered. Fe cation is bound by residues histidine 252, histidine 257, and glutamate 297.

The protein belongs to the biopterin-dependent aromatic amino acid hydroxylase family. In terms of assembly, forms monomers. The cofactor is Fe(2+).

Its subcellular location is the plastid. The protein resides in the chloroplast. It catalyses the reaction (6R)-L-erythro-5,6,7,8-tetrahydrobiopterin + L-phenylalanine + O2 = (4aS,6R)-4a-hydroxy-L-erythro-5,6,7,8-tetrahydrobiopterin + L-tyrosine. In terms of biological role, catalyzes the hydroxylation of L-phenylalanine to L-tyrosine. Does not seem to be tetrahydropterin-dependent and shows preference for 10-formyltetrahydrofolate as cosubstrate and electron donor. The protein is Phenylalanine 4-monooxygenase, chloroplastic of Physcomitrium patens (Spreading-leaved earth moss).